A 57-amino-acid polypeptide reads, in one-letter code: Large ribosomal subunit protein bL32A (57 aa).

This sequence belongs to the bacterial ribosomal protein bL32 family.

The chain is Large ribosomal subunit protein bL32A (rpmF1) from Streptomyces coelicolor (strain ATCC BAA-471 / A3(2) / M145).